A 145-amino-acid polypeptide reads, in one-letter code: Putative pre-16S rRNA nuclease (145 aa).

This sequence belongs to the YqgF nuclease family.

The protein resides in the cytoplasm. Functionally, could be a nuclease involved in processing of the 5'-end of pre-16S rRNA. The chain is Putative pre-16S rRNA nuclease from Thiobacillus denitrificans (strain ATCC 25259 / T1).